Here is a 359-residue protein sequence, read N- to C-terminus: Beta-1,3-galactosyltransferase bre-2 (359 aa).

At 1-11 (MRQSRRASSRV) the chain is on the cytoplasmic side. Residues 12–29 (NRLVVIFIIVASGFLLLY) form a helical; Signal-anchor for type II membrane protein membrane-spanning segment. Topologically, residues 30-359 (KNTQQFTQID…NPDLEELKEK (330 aa)) are lumenal. Residues Asn73, Asn163, and Asn209 are each glycosylated (N-linked (GlcNAc...) asparagine).

This sequence belongs to the glycosyltransferase 31 family.

It is found in the golgi apparatus membrane. The protein operates within protein modification; protein glycosylation. Its function is as follows. Transfers N-acetylgalactosamine onto carbohydrate substrates. Involved in susceptibility to pore-forming crystal toxins in conjunction with bre-1, bre-3, bre-4, and bre-5. Involved in resistance to the nematotoxic C.cinerea galectin Cgl2. The sequence is that of Beta-1,3-galactosyltransferase bre-2 from Caenorhabditis elegans.